Here is a 121-residue protein sequence, read N- to C-terminus: Cell division protein FtsB (121 aa).

Over 1 to 6 (MRNWRW) the chain is Cytoplasmic. Residues 7–24 (LLLVLAVLLAWLQYRFWF) form a helical membrane-spanning segment. Topologically, residues 25 to 121 (GPGNSGEVMM…PEPIDPVDHP (97 aa)) are periplasmic. A coiled-coil region spans residues 31–66 (EVMMLEAQVAHQTQDNEGLRQRNQALAAEVKDLKDG). The interval 92–121 (EDAPLPAPASPEAPAPPQQAPEPIDPVDHP) is disordered. A compositionally biased stretch (pro residues) spans 96 to 115 (LPAPASPEAPAPPQQAPEPI).

The protein belongs to the FtsB family. Part of a complex composed of FtsB, FtsL and FtsQ.

The protein localises to the cell inner membrane. Essential cell division protein. May link together the upstream cell division proteins, which are predominantly cytoplasmic, with the downstream cell division proteins, which are predominantly periplasmic. The protein is Cell division protein FtsB of Xanthomonas euvesicatoria pv. vesicatoria (strain 85-10) (Xanthomonas campestris pv. vesicatoria).